The sequence spans 136 residues: MLSPKRTKFRRHHRGKMRGVATRGNKVSFGDFGLKTLEPGWLTSRQIEAGRRAMTRYTRRGGQLWIRVFPDKPVTIRPAETRMGSGKGSPEYWVAVVKPGTILYEMKGVTPEIARSAMRVAGFKMPVKTQFVVRDV.

The protein belongs to the universal ribosomal protein uL16 family. Part of the 50S ribosomal subunit.

It is found in the plastid. Its subcellular location is the chloroplast. This is Large ribosomal subunit protein uL16c from Mesostigma viride (Green alga).